The following is a 322-amino-acid chain: Acetyl-coenzyme A carboxylase carboxyl transferase subunit alpha (322 aa).

Residues 30 to 293 (ALDISAEITR…RQALQESLRK (264 aa)) form the CoA carboxyltransferase C-terminal domain.

This sequence belongs to the AccA family. As to quaternary structure, acetyl-CoA carboxylase is a heterohexamer composed of biotin carboxyl carrier protein (AccB), biotin carboxylase (AccC) and two subunits each of ACCase subunit alpha (AccA) and ACCase subunit beta (AccD).

It localises to the cytoplasm. It catalyses the reaction N(6)-carboxybiotinyl-L-lysyl-[protein] + acetyl-CoA = N(6)-biotinyl-L-lysyl-[protein] + malonyl-CoA. It participates in lipid metabolism; malonyl-CoA biosynthesis; malonyl-CoA from acetyl-CoA: step 1/1. Its function is as follows. Component of the acetyl coenzyme A carboxylase (ACC) complex. First, biotin carboxylase catalyzes the carboxylation of biotin on its carrier protein (BCCP) and then the CO(2) group is transferred by the carboxyltransferase to acetyl-CoA to form malonyl-CoA. This Nitrosomonas eutropha (strain DSM 101675 / C91 / Nm57) protein is Acetyl-coenzyme A carboxylase carboxyl transferase subunit alpha.